Consider the following 609-residue polypeptide: DNA-directed RNA polymerase subunit beta' (609 aa).

Zn(2+) contacts are provided by cysteine 67, cysteine 69, cysteine 82, and cysteine 85. Mg(2+) is bound by residues aspartate 460, aspartate 462, and aspartate 464.

Belongs to the RNA polymerase beta' chain family. RpoC1 subfamily. As to quaternary structure, in plastids the minimal PEP RNA polymerase catalytic core is composed of four subunits: alpha, beta, beta', and beta''. When a (nuclear-encoded) sigma factor is associated with the core the holoenzyme is formed, which can initiate transcription. Requires Mg(2+) as cofactor. Zn(2+) is required as a cofactor.

Its subcellular location is the plastid. The protein resides in the chloroplast. The catalysed reaction is RNA(n) + a ribonucleoside 5'-triphosphate = RNA(n+1) + diphosphate. Functionally, DNA-dependent RNA polymerase catalyzes the transcription of DNA into RNA using the four ribonucleoside triphosphates as substrates. The chain is DNA-directed RNA polymerase subunit beta' from Emiliania huxleyi (Coccolithophore).